The following is a 101-amino-acid chain: Small ribosomal subunit protein bS18c (101 aa).

It belongs to the bacterial ribosomal protein bS18 family. In terms of assembly, part of the 30S ribosomal subunit.

It localises to the plastid. Its subcellular location is the chloroplast. This Lactuca sativa (Garden lettuce) protein is Small ribosomal subunit protein bS18c.